The chain runs to 307 residues: N-myc-interactor (307 aa).

Residues 1 to 24 form a disordered region; sequence MEADKDDTQQILKEHSPDEFIKDE. S16 is modified (phosphoserine). K22 participates in a covalent cross-link: Glycyl lysine isopeptide (Lys-Gly) (interchain with G-Cter in ubiquitin). Residues 30 to 64 are a coiled coil; it reads IDEITKKNIQLKKEIQKLETELQEATKEFQIKEDI. NID domains lie at 103–192 and 201–292; these read GQAL…GEVD and GSAV…EVDV.

This sequence belongs to the NMI family. As to quaternary structure, interacts with MYCN and MYC, as well as with other transcription factors with a Zip, HLH or a HLH-Zip motif. Interacts with all STAT proteins except STAT2. Interacts with IRF7, the interaction is direct and leads to the inhibition of IRF7-mediated type I IFN production. Interacts (via coiled-coil domain) with TRIM21 (via the SPRY domain); the interaction leads to 'Lys-63'-linked ubiquitination of NMI. Interacts with IFI35; the interaction is direct and is facilitated by TRIM21. Interacts with TLR4; the interaction is direct and leads to NF-kappa-B activation. In terms of assembly, (Microbial infection) Interacts with human cytomegalovirus protein UL23; this interaction inhibits NMI-mediated transcription of interferon-gamma stimulated genes. In terms of processing, ubiquitinated. 'Lys-63'-linked ubiquitination by TRIM21 promotes interaction with IFI35 and inhibits virus-triggered type I IFN-beta production. As to expression, expressed in adult spleen, liver, and kidney. Expressed in fetal thymus, liver, placenta, spleen, lung, and kidney but not brain. Expressed in macrophages.

The protein resides in the cytoplasm. It is found in the nucleus. The protein localises to the secreted. Its function is as follows. Acts as a signaling pathway regulator involved in innate immune system response. In response to interleukin 2/IL2 and interferon IFN-gamma/IFNG, interacts with signal transducer and activator of transcription/STAT which activate the transcription of downstream genes involved in a multitude of signals for development and homeostasis. Enhances the recruitment of CBP/p300 coactivators to STAT1 and STAT5, resulting in increased STAT1- and STAT5-dependent transcription. In response to interferon IFN-alpha, associates in a complex with signaling pathway regulator IFI35 to regulate immune response; the complex formation prevents proteasome-mediated degradation of IFI35. In complex with IFI35, inhibits virus-triggered type I IFN-beta production when ubiquitinated by ubiquitin-protein ligase TRIM21. In complex with IFI35, negatively regulates nuclear factor NF-kappa-B signaling by inhibiting the nuclear translocation, activation and transcription of NF-kappa-B subunit p65/RELA, resulting in the inhibition of endothelial cell proliferation, migration and re-endothelialization of injured arteries. Negatively regulates virus-triggered type I interferon/IFN production by inducing proteosome-dependent degradation of IRF7, a transcriptional regulator of type I IFN, thereby interfering with cellular antiviral responses. Beside its role as an intracellular signaling pathway regulator, also functions extracellularly as damage-associated molecular patterns (DAMPs) to promote inflammation, when actively released by macrophage to the extracellular space during cell injury or pathogen invasion. Macrophage-secreted NMI activates NF-kappa-B signaling in adjacent macrophages through Toll-like receptor 4/TLR4 binding and activation, thereby inducing NF-kappa-B translocation from the cytoplasm into the nucleus which promotes the release of pro-inflammatory cytokines. The sequence is that of N-myc-interactor from Homo sapiens (Human).